A 459-amino-acid chain; its full sequence is Argininosuccinate lyase (459 aa).

It belongs to the lyase 1 family. Argininosuccinate lyase subfamily.

It is found in the cytoplasm. The catalysed reaction is 2-(N(omega)-L-arginino)succinate = fumarate + L-arginine. It participates in amino-acid biosynthesis; L-arginine biosynthesis; L-arginine from L-ornithine and carbamoyl phosphate: step 3/3. In Geobacillus sp. (strain WCH70), this protein is Argininosuccinate lyase.